A 172-amino-acid chain; its full sequence is Exocyst complex component 1-like (172 aa).

This chain is Exocyst complex component 1-like, found in Mus musculus (Mouse).